We begin with the raw amino-acid sequence, 206 residues long: MDPVRLYYSYNDIHKMCAQQAEKILETFRPDVIIAIGGGGFIPARILRTFLKKKGSKNIPIQAIGLSLYEELVSDSPEEVPGLEVKRTQWLDFSTLGMVDLVGKNILIVDEVDDTRTTLHYALRELQRDVAEQAKKLNREGEKTTFGIFVVHNKVKPKNAQLDKEILDKYYFTGCNTPDCWIMYPWEAQDIEEHDSHVAKMGDLKP.

GMP-binding positions include 110–118, K154, and 181–187; these read DEVDDTRTT and WIMYPWE. The active-site Proton acceptor is the D114.

This sequence belongs to the purine/pyrimidine phosphoribosyltransferase family. Dimer. Mg(2+) is required as a cofactor.

The protein resides in the endoplasmic reticulum. The enzyme catalyses IMP + diphosphate = hypoxanthine + 5-phospho-alpha-D-ribose 1-diphosphate. It catalyses the reaction GMP + diphosphate = guanine + 5-phospho-alpha-D-ribose 1-diphosphate. Functionally, converts guanine to guanosine monophosphate, and hypoxanthine to inosine monophosphate. Transfers the 5-phosphoribosyl group from 5-phosphoribosylpyrophosphate onto the purine. Plays a central role in the generation of purine nucleotides through the purine salvage pathway. In Schizosaccharomyces pombe (strain 972 / ATCC 24843) (Fission yeast), this protein is Hypoxanthine-guanine phosphoribosyltransferase (hpt1).